The sequence spans 448 residues: MQGTKNNIYTVSRLNGEVRQILEGQLGKIWLNGEISNFSSPSSGHWYLTLKDHSSQIRCAMFKGRNQTVSFKPINGQQVLVKGAISVYEPRGDYQLLIESMLPAGDGLLAQQFDALKMKLAAEGLFAADTKRPLPKNIQRIGVITSPTGAAIRDVLHVLARRDPSIEVIIYPTQVQGETAAQSICQAINIANQRLEVDVLLLTRGGGSLEDLWCFNSEALAHTIYNSALPVVSAVGHEVDTTISDYVADIRAPTPSAGAELLSQDSDNKAQKLATALSRLQQSAKHYQLKQERRLSLLEHRLQRQDPKRTLQQFEQRFDEMQLRLESALLNRLHILSRRQQLLASRLEQQSPKHKLTIEGNRLSYLASRLQDALQDKLSQSEQRIKYAAHQLETVSPLATLSRGYSITTDIHNQVVDSADKLTIGDSLQTRLRHGQVISTVTQIKPLE.

This sequence belongs to the XseA family. Heterooligomer composed of large and small subunits.

It is found in the cytoplasm. The enzyme catalyses Exonucleolytic cleavage in either 5'- to 3'- or 3'- to 5'-direction to yield nucleoside 5'-phosphates.. Functionally, bidirectionally degrades single-stranded DNA into large acid-insoluble oligonucleotides, which are then degraded further into small acid-soluble oligonucleotides. This Shewanella baltica (strain OS155 / ATCC BAA-1091) protein is Exodeoxyribonuclease 7 large subunit.